The chain runs to 221 residues: PKHD-type hydroxylase NATL1_16191 (221 aa).

One can recognise a Fe2OG dioxygenase domain in the interval 80–174 (LIHGVMFTQS…RHVCVGWIQS (95 aa)). The Fe cation site is built by H98, D100, and H155. R165 contributes to the 2-oxoglutarate binding site.

Fe(2+) serves as cofactor. The cofactor is L-ascorbate.

The polypeptide is PKHD-type hydroxylase NATL1_16191 (Prochlorococcus marinus (strain NATL1A)).